The following is a 54-amino-acid chain: Insulin (54 aa).

3 disulfides stabilise this stretch: Cys7/Cys39, Cys19/Cys52, and Cys38/Cys43.

Belongs to the insulin family. In terms of assembly, heterodimer of a B chain and an A chain linked by two disulfide bonds.

It is found in the secreted. Its function is as follows. Insulin decreases blood glucose concentration. It increases cell permeability to monosaccharides, amino acids and fatty acids. It accelerates glycolysis, the pentose phosphate cycle, and glycogen synthesis in liver. The protein is Insulin (ins) of Squalus acanthias (Spiny dogfish).